Consider the following 317-residue polypeptide: Transaldolase (317 aa).

Catalysis depends on K126, which acts as the Schiff-base intermediate with substrate.

This sequence belongs to the transaldolase family. Type 1 subfamily. In terms of assembly, homodimer.

It is found in the cytoplasm. It catalyses the reaction D-sedoheptulose 7-phosphate + D-glyceraldehyde 3-phosphate = D-erythrose 4-phosphate + beta-D-fructose 6-phosphate. Its pathway is carbohydrate degradation; pentose phosphate pathway; D-glyceraldehyde 3-phosphate and beta-D-fructose 6-phosphate from D-ribose 5-phosphate and D-xylulose 5-phosphate (non-oxidative stage): step 2/3. Functionally, transaldolase is important for the balance of metabolites in the pentose-phosphate pathway. The sequence is that of Transaldolase from Burkholderia orbicola (strain AU 1054).